A 130-amino-acid chain; its full sequence is Flagellar assembly factor FliW (130 aa).

Belongs to the FliW family. In terms of assembly, interacts with translational regulator CsrA and flagellin(s).

Its subcellular location is the cytoplasm. Acts as an anti-CsrA protein, binds CsrA and prevents it from repressing translation of its target genes, one of which is flagellin. Binds to flagellin and participates in the assembly of the flagellum. The polypeptide is Flagellar assembly factor FliW (Borrelia turicatae (strain 91E135)).